The primary structure comprises 747 residues: Phosphoribosylformylglycinamidine synthase subunit PurL (747 aa).

Histidine 46 is an active-site residue. Positions 49 and 88 each coordinate ATP. Residue glutamate 90 participates in Mg(2+) binding. Substrate contacts are provided by residues 91–94 and arginine 113; that span reads SHNH. Catalysis depends on histidine 92, which acts as the Proton acceptor. Aspartate 114 provides a ligand contact to Mg(2+). Glutamine 237 is a substrate binding site. Aspartate 265 provides a ligand contact to Mg(2+). Position 309 to 311 (309 to 311) interacts with substrate; the sequence is ESQ. Positions 493 and 530 each coordinate ATP. Residue asparagine 531 participates in Mg(2+) binding. Serine 533 serves as a coordination point for substrate.

This sequence belongs to the FGAMS family. Monomer. Part of the FGAM synthase complex composed of 1 PurL, 1 PurQ and 2 PurS subunits.

The protein localises to the cytoplasm. It carries out the reaction N(2)-formyl-N(1)-(5-phospho-beta-D-ribosyl)glycinamide + L-glutamine + ATP + H2O = 2-formamido-N(1)-(5-O-phospho-beta-D-ribosyl)acetamidine + L-glutamate + ADP + phosphate + H(+). Its pathway is purine metabolism; IMP biosynthesis via de novo pathway; 5-amino-1-(5-phospho-D-ribosyl)imidazole from N(2)-formyl-N(1)-(5-phospho-D-ribosyl)glycinamide: step 1/2. In terms of biological role, part of the phosphoribosylformylglycinamidine synthase complex involved in the purines biosynthetic pathway. Catalyzes the ATP-dependent conversion of formylglycinamide ribonucleotide (FGAR) and glutamine to yield formylglycinamidine ribonucleotide (FGAM) and glutamate. The FGAM synthase complex is composed of three subunits. PurQ produces an ammonia molecule by converting glutamine to glutamate. PurL transfers the ammonia molecule to FGAR to form FGAM in an ATP-dependent manner. PurS interacts with PurQ and PurL and is thought to assist in the transfer of the ammonia molecule from PurQ to PurL. The chain is Phosphoribosylformylglycinamidine synthase subunit PurL from Deinococcus radiodurans (strain ATCC 13939 / DSM 20539 / JCM 16871 / CCUG 27074 / LMG 4051 / NBRC 15346 / NCIMB 9279 / VKM B-1422 / R1).